Consider the following 215-residue polypeptide: Flagellin B1 (215 aa).

Residues 1 to 12 (MSVKNFMNNKKG) constitute a propeptide that is removed on maturation.

Belongs to the archaeal flagellin family.

It is found in the archaeal flagellum. Its function is as follows. Flagellin is the subunit protein which polymerizes to form the filaments of archaeal flagella. In Methanococcus vannielii (strain ATCC 35089 / DSM 1224 / JCM 13029 / OCM 148 / SB), this protein is Flagellin B1 (flaB1).